The primary structure comprises 205 residues: Recombination protein RecR (205 aa).

The segment at 58 to 75 (CSVCQNVTDRDADPCYIC) adopts a C4-type zinc-finger fold. The 100-residue stretch at 83 to 182 (SVICVVESPA…SVTKIARGIP (100 aa)) folds into the Toprim domain.

Belongs to the RecR family.

Its function is as follows. May play a role in DNA repair. It seems to be involved in an RecBC-independent recombinational process of DNA repair. It may act with RecF and RecO. In Chlorobium limicola (strain DSM 245 / NBRC 103803 / 6330), this protein is Recombination protein RecR.